The sequence spans 398 residues: Cysteine protease ATG4A (398 aa).

Cys77 (nucleophile) is an active-site residue. Catalysis depends on residues Asp279 and His281. An LIR motif is present at residues 393 to 396 (FEIL).

This sequence belongs to the peptidase C54 family. Interacts with ATG9A; the interaction is direct.

The protein resides in the cytoplasm. It catalyses the reaction [protein]-C-terminal L-amino acid-glycyl-phosphatidylethanolamide + H2O = [protein]-C-terminal L-amino acid-glycine + a 1,2-diacyl-sn-glycero-3-phosphoethanolamine. With respect to regulation, inhibited by N-ethylmaleimide. Redox-regulated during autophagy since reducing conditions activate ATG4A whereas an oxidizing environment such as the presence of H(2)O(2) inhibits its activity. Cysteine protease that plays a key role in autophagy by mediating both proteolytic activation and delipidation of ATG8 family proteins. The protease activity is required for proteolytic activation of ATG8 family proteins: cleaves the C-terminal amino acid of ATG8 proteins to reveal a C-terminal glycine. Exposure of the glycine at the C-terminus is essential for ATG8 proteins conjugation to phosphatidylethanolamine (PE) and insertion to membranes, which is necessary for autophagy. Preferred substrate is GABARAPL2 followed by MAP1LC3A and GABARAP. Protease activity is also required to counteract formation of high-molecular weight conjugates of ATG8 proteins (ATG8ylation): acts as a deubiquitinating-like enzyme that removes ATG8 conjugated to other proteins, such as ATG3. In addition to the protease activity, also mediates delipidation of ATG8 family proteins. Catalyzes delipidation of PE-conjugated forms of ATG8 proteins during macroautophagy. Compared to ATG4B, the major protein for proteolytic activation of ATG8 proteins, shows weaker ability to cleave the C-terminal amino acid of ATG8 proteins, while it displays stronger delipidation activity. Involved in phagophore growth during mitophagy independently of its protease activity and of ATG8 proteins: acts by regulating ATG9A trafficking to mitochondria and promoting phagophore-endoplasmic reticulum contacts during the lipid transfer phase of mitophagy. Functionally, (Microbial infection) Mediates cleavage of an ATG8 protein homolog coded in the genome of cytopathogenic bovine viral diarrhea virus (BVDV). The protein is Cysteine protease ATG4A of Bos taurus (Bovine).